The primary structure comprises 275 residues: MANFKGHALPGSFFLIIGLCWSVKYPLKYFSHTRKNSPLHYYQRLEIVEAAIRTLFSVTGILAEQFVPDGPHLHLYHENHWIKLMNWQHSTMYLFFAVSGIVDMLTYLVSHVPLGVDRLVMAVAVFMEGFLFYYHVHNRPPLDQHIHSLLLYALFGGCVSISLEVIFRDHIVLELFRTSLIILQGTWFWQIGFVLFPPFGTPEWDQKDDANLMFITMCFCWHYLAALSIVAVNYSLVYCLLTRMKRHGRGEIIGIQKLNSDDTYQTALLSGSDEE.

Helical transmembrane passes span 7–27, 47–67, 94–114, 116–136, 146–166, 180–200, and 212–232; these read HALPGSFFLIIGLCWSVKYPL, IVEAAIRTLFSVTGILAEQFV, LFFAVSGIVDMLTYLVSHVPL, VDRLVMAVAVFMEGFLFYYHV, IHSLLLYALFGGCVSISLEVI, LIILQGTWFWQIGFVLFPPFG, and LMFITMCFCWHYLAALSIVAV. 2 positions are modified to phosphoserine: serine 270 and serine 272.

The protein belongs to the TMEM45 family. (Microbial infection) Interacts with sindbis virus nsP1 and nsP4; these interactions lead to viral RNA replication inhibition. As to quaternary structure, (Microbial infection) Interacts with chikungunya virus nsP1 and nsP4; these interactions lead to viral RNA replication inhibition.

The protein localises to the endosome membrane. Its subcellular location is the lysosome membrane. It localises to the golgi apparatus. The protein resides in the trans-Golgi network membrane. In terms of biological role, plays a role in innate immunity. Mechanistically, promotes alphaviruses RNA degradation by interacting with the viral polymerase nsP4 and the mRNA-capping enzyme nsP1 and thereby interfering with the interaction between viral RNA and nsP1. The polypeptide is Transmembrane protein 45B (TMEM45B) (Homo sapiens (Human)).